A 465-amino-acid polypeptide reads, in one-letter code: ATP-dependent protease ATPase subunit HslU (465 aa).

Residues Val-19, 61–66, Asp-277, Glu-343, and Arg-415 contribute to the ATP site; that span reads GVGKTE.

This sequence belongs to the ClpX chaperone family. HslU subfamily. As to quaternary structure, a double ring-shaped homohexamer of HslV is capped on each side by a ring-shaped HslU homohexamer. The assembly of the HslU/HslV complex is dependent on binding of ATP.

Its subcellular location is the cytoplasm. ATPase subunit of a proteasome-like degradation complex; this subunit has chaperone activity. The binding of ATP and its subsequent hydrolysis by HslU are essential for unfolding of protein substrates subsequently hydrolyzed by HslV. HslU recognizes the N-terminal part of its protein substrates and unfolds these before they are guided to HslV for hydrolysis. The protein is ATP-dependent protease ATPase subunit HslU of Geobacillus sp. (strain WCH70).